The chain runs to 447 residues: Mannose/glucose-specific lectin (447 aa).

3 repeat units span residues 1-149 (SLKG…VQPV), 150-295 (PHGT…VKPR), and 296-447 (DVEG…DTAV). Residues 1-447 (SLKGMISVGP…GIFVKPDTAV (447 aa)) form a 3 X approximate tandem repeats region. Jacalin-type lectin domains follow at residues 5–148 (MISV…FVQP), 153–294 (TISF…YVKP), and 300–443 (SISI…FVKP).

Belongs to the jacalin lectin family. In terms of assembly, homodimer. Post-translationally, the N-terminus is blocked.

Mannose/glucose specific lectin. Shows agglutinating activity against rabbit erythrocytes. This Parkia platycephala protein is Mannose/glucose-specific lectin.